The primary structure comprises 606 residues: Protein couch potato (606 aa).

The short motif at 81–105 is the Nuclear localization signal element; sequence IKRRPTLPQTPASAPQVLSPSPKRQ. 7 consecutive repeat copies span residues 91–95, 109–113, 114–118, 122–126, 128–132, 134–138, and 159–163. Residues 91-164 are 7 X 5 AA approximate repeats of P-V-S-V-P; sequence PASAPQVLSP…SHSHPISHPH (74 aa). Disordered stretches follow at residues 147-166, 282-311, 324-365, and 388-410; these read QIAH…PHHH, QQQQ…AGAA, VPTT…TSAA, and PATS…NSNS. Over residues 344–365 the composition is skewed to low complexity; sequence SNSATASAPTTPSPAGSVTSAA. An RRM domain is found at 442 to 524; that stretch reads RTLFVSGLPM…QTIRLEFAKS (83 aa).

As to expression, expressed in neural precursors and their daughter cells in the embryonic peripheral nervous system. Less abundant in a number of glial cells in the peripheral and central nervous systems and also present at low levels in the developing gut.

It is found in the nucleus. May play a role in the development or function of the peripheral nervous system by regulating the processing of nervous system-specific transcripts. The sequence is that of Protein couch potato (cpo) from Drosophila melanogaster (Fruit fly).